We begin with the raw amino-acid sequence, 139 residues long: von Hippel-Lindau-like protein (139 aa).

The tract at residues Met-1 to Pro-22 is disordered. The interval Ser-54 to Leu-135 is beta-domain.

The protein belongs to the VHL family. As to quaternary structure, interacts via the beta domain with the ODD domain of HIF1A. This interaction is independent of prolyl hydroxylation of HIF1A. In terms of tissue distribution, abundantly expressed in the placenta.

Functionally, functions as a dominant-negative VHL to serve as a protector of HIFalpha. This Homo sapiens (Human) protein is von Hippel-Lindau-like protein (VHLL).